Consider the following 185-residue polypeptide: Prenylated Rab acceptor protein 1 (185 aa).

Over 1-78 (MAAQKDQQKD…RNVEYYQSNY (78 aa)) the chain is Cytoplasmic. The tract at residues 30–54 (AGREWLERRRATIRPWGTFVDQQRF) is required for interaction with prenylated RAB3A and VAMP2. A run of 2 helical transmembrane segments spans residues 79–94 (VFVFLGLILYCVVTSP) and 95–112 (MLLVALAVFFGACYILYL). At 113–131 (RTLQSKLVLFGREVSPAHQ) the chain is on the cytoplasmic side. 2 helical membrane passes run 132-148 (YALAGGVSFPFFWLAGA) and 149-165 (GSAVFWVLGATLVLIGS). The required for interaction with GDI1 stretch occupies residues 165 to 185 (SHAAFHQIEPADGEELQMEPV). At 166–185 (HAAFHQIEPADGEELQMEPV) the chain is on the cytoplasmic side. A required for interaction with prenylated RAB3A and VAMP2 region spans residues 175-185 (ADGEELQMEPV). Positions 175–185 (ADGEELQMEPV) are homodimerization.

The protein belongs to the PRA1 family. In terms of assembly, homodimers. Interacts specifically with both prenylated Rab proteins (including RAB3A and RAB1), and VAMP2 (synaptobrevin-2), in an exclusive way. Interacts with NDRG1. Interacts with free GDI1 in the absence of Rab proteins. Also interacts with PCLO. Ubiquitous.

It localises to the cell membrane. The protein resides in the cytoplasm. It is found in the golgi apparatus. The protein localises to the cytoplasmic vesicle. Its subcellular location is the secretory vesicle. It localises to the synaptic vesicle. Functionally, general Rab protein regulator required for vesicle formation from the Golgi complex. May control vesicle docking and fusion by mediating the action of Rab GTPases to the SNARE complexes. In addition it inhibits the removal of Rab GTPases from the membrane by GDI1. The polypeptide is Prenylated Rab acceptor protein 1 (Rabac1) (Rattus norvegicus (Rat)).